Consider the following 212-residue polypeptide: Ras-related protein Rab-2A (212 aa).

The residue at position 2 (alanine 2) is an N-acetylalanine. Positions 2–19 (AYAYLFKYIIIGDTGVGK) are required for interaction with PRKCI. 7 residues coordinate GTP: glycine 16, valine 17, glycine 18, lysine 19, serine 20, cysteine 21, and threonine 38. Position 20 (serine 20) interacts with Mg(2+). Positions 37–42 (LTIGVE) match the Switch 1 motif. Mg(2+)-binding residues include threonine 38 and aspartate 61. Residues 63 to 72 (AGQESFRSIT) carry the Switch 2 motif. Glycine 64, asparagine 119, lysine 120, aspartate 122, alanine 150, and lysine 151 together coordinate GTP. Residues cysteine 211 and cysteine 212 are each lipidated (S-geranylgeranyl cysteine).

The protein belongs to the small GTPase superfamily. Rab family. Interacts with PRKCI. Interacts with TRIP11. Interacts (in GTP-bound form) with GARIN1B. Interacts (GTP-bound) with HOPS complex component VPS39; interaction contributes to obtaining a functional HOPS complex that promotes autophagosome-lysosome membrane fusion driven by STX17-SNAP29-VAMP8. May interact with VPS41. Requires Mg(2+) as cofactor. Prenylated. Prenylation is required for association with cellular membranes.

It localises to the endoplasmic reticulum-Golgi intermediate compartment membrane. The protein localises to the melanosome. The protein resides in the endoplasmic reticulum membrane. Its subcellular location is the golgi apparatus membrane. It is found in the cytoplasmic vesicle. It localises to the secretory vesicle. The protein localises to the acrosome. The protein resides in the autophagosome membrane. The catalysed reaction is GTP + H2O = GDP + phosphate + H(+). Its activity is regulated as follows. Regulated by guanine nucleotide exchange factors (GEFs) which promote the exchange of bound GDP for free GTP, GTPase activating proteins (GAPs) which increase the GTP hydrolysis activity, and GDP dissociation inhibitors (GDIs) which inhibit the dissociation of the nucleotide from the GTPase. Functionally, the small GTPases Rab are key regulators of intracellular membrane trafficking, from the formation of transport vesicles to their fusion with membranes. Rabs cycle between active GTP-bound and inactive GDP-bound states. In their active state, drive transport of vesicular carriers from donor organelles to acceptor organelles to regulate the membrane traffic that maintains organelle identity and morphology. RAB2A regulates autophagy by promoting autophagosome-lysosome fusion via recruitment of the HOPS endosomal tethering complex; this process involves autophagosomal RAB2A and lysosomal RAB39A recruitment of HOPS subcomplexes VPS39-VPS11 and VPS41-VPS16-VPS18-VPS33A, respectively, which assemble into a functional complex to mediate membrane tethering and SNAREs-driven membrane fusion. Required for protein transport from the endoplasmic reticulum to the Golgi complex. Regulates the compacted morphology of the Golgi. Together with RAB2B, redundantly required for efficient autophagic flux. This chain is Ras-related protein Rab-2A (RAB2A), found in Canis lupus familiaris (Dog).